A 465-amino-acid chain; its full sequence is WASH complex subunit 1 (465 aa).

Residues 1–54 (MTPVRMQHSLAGQTYAVPFIQPDLRREEAVQQMADALQYLQKVSGDIFSRISQQ) form a required for WASH complex assembly region. Residues 1–167 (MTPVRMQHSL…EGLGGLPSNI (167 aa)) form a WHD1 region. Residue K220 forms a Glycyl lysine isopeptide (Lys-Gly) (interchain with G-Cter in ubiquitin) linkage. Disordered stretches follow at residues 297-359 (QDGV…VDPS), 376-407 (GKAK…QGGH), and 423-465 (ISGK…DWES). The segment covering 302-314 (TPPPPPPPPPPAP) has biased composition (pro residues). Positions 349 to 465 (QGAPREVVDP…AEEDEDDWES (117 aa)) are VCA. Residues 361–383 (GWATLLESIRQAGGIGKAKLRSM) enclose the WH2 domain. The span at 382 to 398 (SMKERKLEKQQQKEQEQ) shows a compositional bias: basic and acidic residues. Residues 424-436 (SGKGPGAGEGPGG) show a composition bias toward gly residues. Over residues 456–465 (AEEDEDDWES) the composition is skewed to acidic residues.

This sequence belongs to the WASH1 family. Component of the WASH core complex also described as WASH regulatory complex (SHRC) composed of WASH (WASHC1, WASH2P or WASH3P), WASHC2 (WASHC2A or WASHC2C), WASHC3, WASHC4 and WASHC5. The WASH core complex associates via WASHC2 with the F-actin-capping protein dimer (formed by CAPZA1, CAPZA2 or CAPZA3 and CAPZB) in a transient or substoichiometric manner which was initially described as WASH complex. Interacts (via WHD1 region) with WASHC2C; the interaction is direct. Interacts with VPS35; mediates the association with the retromer CSC complex. Interacts with FKBP15. Interacts with alpha-tubulin. Interacts with BECN1; this interaction can be competed out by AMBRA1 binding. Interacts with BLOC1S2; may associate with the BLOC-1 complex. Interacts with tubulin gamma chain (TUBG1 or TUBG2). Interacts with EXOC1, EXOC4, EXOC8; in MMP14-positive endosomes in breast tumor cells; indicative for an association with the exocyst complex. Interacts with TBC1D23. In terms of processing, ubiquitinated at Lys-220 via 'Lys-63'-linked ubiquitin chains by the TRIM27:MAGEL2 E3 ubiquitin ligase complex, leading to promote endosomal F-actin assembly.

The protein resides in the early endosome membrane. It is found in the recycling endosome membrane. It localises to the late endosome. Its subcellular location is the cytoplasmic vesicle. The protein localises to the autophagosome. The protein resides in the cytoplasm. It is found in the cytoskeleton. It localises to the microtubule organizing center. Its subcellular location is the centrosome. The protein localises to the centriole. Acts as a component of the WASH core complex that functions as a nucleation-promoting factor (NPF) at the surface of endosomes, where it recruits and activates the Arp2/3 complex to induce actin polymerization, playing a key role in the fission of tubules that serve as transport intermediates during endosome sorting. Involved in endocytic trafficking of EGF. Involved in transferrin receptor recycling. Regulates the trafficking of endosomal alpha5beta1 integrin to the plasma membrane and involved in invasive cell migration. In T-cells involved in endosome-to-membrane recycling of receptors including T-cell receptor (TCR), CD28 and ITGAL; proposed to be implicated in T cell proliferation and effector function. In dendritic cells involved in endosome-to-membrane recycling of major histocompatibility complex (MHC) class II probably involving retromer and subsequently allowing antigen sampling, loading and presentation during T-cell activation. Involved in Arp2/3 complex-dependent actin assembly driving Salmonella typhimurium invasion independent of ruffling. Involved in the exocytosis of MMP14 leading to matrix remodeling during invasive migration and implicating late endosome-to-plasma membrane tubular connections and cooperation with the exocyst complex. Involved in negative regulation of autophagy independently from its role in endosomal sorting by inhibiting BECN1 ubiquitination to inactivate PIK3C3/Vps34 activity. This chain is WASH complex subunit 1, found in Homo sapiens (Human).